Here is a 303-residue protein sequence, read N- to C-terminus: Phytochrome-associated serine/threonine-protein phosphatase 1 (303 aa).

Residues Asp50, His52, Asp78, and Asn110 each contribute to the Zn(2+) site. His111 (proton donor) is an active-site residue. His160 and His234 together coordinate Zn(2+).

Belongs to the PPP phosphatase family. PP-6 (PP-V) subfamily. As to quaternary structure, interacts with PHYA and PHYB, mostly when they are phosphorylated and in Pfr forms. Interacts with TAP46. Interacts with PIN1 and PIN2. Interacts with ABI5. Interacts with PIF3 and PIF4. Protein phosphatase 6 (PP6) holoenzyme is a heterotrimeric complex formed by the catalytic subunit FYPP, a SAPS domain-containing subunit (SAL) and a protein phosphatase 2A regulatory subunit A (PP2AA). Zn(2+) serves as cofactor. In terms of tissue distribution, mostly expressed in flowers. Also detected to a lower extent in stems and leaves. Expressed in roots.

The protein localises to the cytoplasm. The catalysed reaction is O-phospho-L-seryl-[protein] + H2O = L-seryl-[protein] + phosphate. It catalyses the reaction O-phospho-L-threonyl-[protein] + H2O = L-threonyl-[protein] + phosphate. Functionally, catalytic subunit of protein phosphatase 6 (PP6). Dephosphorylates phosphorylated phytochromes, with a preference toward Pfr forms. Plays a major role in the photoperiodic control of flowering time in long days by modulating phytochrome signals in flowering time control. Involved in the regulation of polar auxin transport in roots. Dephosphorylates directly the auxin efflux carriers PIN1 and PIN2, thus promoting their proper polar localization in root cell plasma membrane. Acts antagonistically with the protein kinase PID to regulate the reversible phosphorylation of PIN and polar targeting, subsequently impacting polar auxin transport and plant development. Involved in the regulation of abscisic acid (ABA) signaling during seed germination and postgermination seedling growth. Functions as a negative regulator of ABA signaling through direct dephosphorylation and destabilization of ABI5. Acts antagonistically with the protein kinase SRK2E/SNRK2.6 to regulate ABI5 phosphorylation and ABA responses. Involved in the regulation of phosphorylation status in hypocotyl phototropism. Involved in the negative regulation of photomorphogenesis by controlling the stability and transcriptional activity of PIF3 and PIF4 proteins in the dark, via the regulation of their phosphorylation status. The polypeptide is Phytochrome-associated serine/threonine-protein phosphatase 1 (Arabidopsis thaliana (Mouse-ear cress)).